Here is a 759-residue protein sequence, read N- to C-terminus: Glucosylceramidase (759 aa).

E247 functions as the Proton donor in the catalytic mechanism. Residue E497 is the Nucleophile of the active site. The interval 576–600 (AFENESQRDPQSPAYSESQRNTESY) is disordered. Residues 584-599 (DPQSPAYSESQRNTES) are compositionally biased toward polar residues.

It belongs to the glycosyl hydrolase 5 (cellulase A) family.

The protein resides in the membrane. The catalysed reaction is a beta-D-glucosyl-(1&lt;-&gt;1')-N-acylsphing-4-enine + H2O = an N-acylsphing-4-enine + D-glucose. In terms of biological role, specifically hydrolyzes the glucosidic linkage in glucosylceramide. May prevent accumulation of aberrent glucosylceramide containing immature ceramide. This is Glucosylceramidase from Aspergillus fumigatus (Neosartorya fumigata).